Consider the following 440-residue polypeptide: Serine/threonine-protein kinase VRK1 (440 aa).

The Protein kinase domain occupies 37–317 (WKLGLPIGQG…LLEYTEKPLY (281 aa)). Residues 43–51 (IGQGGFGCI) and K71 contribute to the ATP site. A Glycyl lysine isopeptide (Lys-Gly) (interchain with G-Cter in SUMO2) cross-link involves residue K71. The Proton acceptor role is filled by D177. S342 carries the phosphoserine; by PLK3 modification. S376 is modified (phosphoserine). Phosphothreonine is present on T378. Polar residues-rich tracts occupy residues 379–391 (QVQEAAQTRSVES) and 398–410 (SMSQPAAGCSSSD). The tract at residues 379 to 440 (QVQEAAQTRS…GSRTRKKAQK (62 aa)) is disordered. The required for interaction with the nucleosome stretch occupies residues 387–393 (RSVESQG).

The protein belongs to the protein kinase superfamily. CK1 Ser/Thr protein kinase family. VRK subfamily. As to quaternary structure, interacts with HDAC1, KAT2B, SETDB1, KDM3A and KDM4A. Associates with the nucleosome through interactions with nucleosome DNA, histone H2A and histone H2B; the interaction with H2A and H2B is mediated by the nucleosome acidic patch, a cluster of negatively charged residues of H2A and H2B forming a cleft within the nucleosome core. Post-translationally, autophosphorylated at various serine and threonine residues. Autophosphorylation does not impair its ability to phosphorylate p53/TP53. Phosphorylation by PLK3 leads to induction of Golgi fragmentation during mitosis. In terms of tissue distribution, highly expressed in testis. Expressed in liver, kidney and muscle. Weakly expressed in thymus, bone marrow and spleen.

Its subcellular location is the nucleus. The protein localises to the cytoplasm. It is found in the cajal body. The catalysed reaction is L-seryl-[protein] + ATP = O-phospho-L-seryl-[protein] + ADP + H(+). It catalyses the reaction L-threonyl-[protein] + ATP = O-phospho-L-threonyl-[protein] + ADP + H(+). Its activity is regulated as follows. Active in presence of Mn(2+), Mg(2+) and Zn(2+), but is not functional with Ca(2+) or Cu(2+). Has a higher affinity for Mn(2+) than for Mg(2+). RAN inhibits its autophosphorylation and its ability to phosphorylate histone H3. Serine/threonine kinase involved in the regulation of key cellular processes including the cell cycle, nuclear condensation, transcription regulation, and DNA damage response. Controls chromatin organization and remodeling by mediating phosphorylation of histone H3 on 'Thr-4' and histone H2AX (H2aXT4ph). It also phosphorylates KAT5 in response to DNA damage, promoting KAT5 association with chromatin and histone acetyltransferase activity. Is involved in the regulation of cell cycle progression of neural progenitors, and is required for proper cortical neuronal migration. Is involved in neurite elongation and branching in motor neurons, and has an essential role in Cajal bodies assembly, acting through COIL phosphorylation and the control of coilin degradation. Involved in Golgi disassembly during the cell cycle: following phosphorylation by PLK3 during mitosis, required to induce Golgi fragmentation. Phosphorylates BANF1: disrupts its ability to bind DNA, reduces its binding to LEM domain-containing proteins and causes its relocalization from the nucleus to the cytoplasm. Phosphorylates TP53BP1 and p53/TP53 on 'Thr-18', preventing the interaction between p53/TP53 and MDM2. Phosphorylates ATF2 which activates its transcriptional activity. Phosphorylates JUN. The polypeptide is Serine/threonine-protein kinase VRK1 (Mus musculus (Mouse)).